The following is a 290-amino-acid chain: MPNRGVVLLDGQALAYNIEKDLKNKIQIITAQTHKRPKLAVILVGKDPASITYVNMKIKACQRVGMDFDLKTLKENITEAELLSLIKDYNTDQNISGILVQLPLPRSIDTKMILEAIDPNKDVDGFHPLNIGKLCTQKESFLPATPMGVMRLLEHYHIEIKGKDVAIIGASNIIGKPLSMLMLNAGASVSVCHILTKDISFYTKNADIVCVGVGKPDLIKASMLKKGAVVVDIGINHLNDGRIVGDVDFINAQKIAGFITPVPKGVGPMTIVSLLENTLIAFEKQQRKGF.

Residues Gly169–Ser171, Ile194, and Ile235 each bind NADP(+).

It belongs to the tetrahydrofolate dehydrogenase/cyclohydrolase family. Homodimer.

It catalyses the reaction (6R)-5,10-methylene-5,6,7,8-tetrahydrofolate + NADP(+) = (6R)-5,10-methenyltetrahydrofolate + NADPH. It carries out the reaction (6R)-5,10-methenyltetrahydrofolate + H2O = (6R)-10-formyltetrahydrofolate + H(+). It functions in the pathway one-carbon metabolism; tetrahydrofolate interconversion. Catalyzes the oxidation of 5,10-methylenetetrahydrofolate to 5,10-methenyltetrahydrofolate and then the hydrolysis of 5,10-methenyltetrahydrofolate to 10-formyltetrahydrofolate. This is Bifunctional protein FolD from Helicobacter pylori (strain J99 / ATCC 700824) (Campylobacter pylori J99).